An 87-amino-acid polypeptide reads, in one-letter code: Small ribosomal subunit protein bS16 (87 aa).

This sequence belongs to the bacterial ribosomal protein bS16 family.

This is Small ribosomal subunit protein bS16 from Onion yellows phytoplasma (strain OY-M).